The chain runs to 155 residues: Protein LOL2 (155 aa).

At methionine 1 the chain carries N-acetylmethionine. Residues 1-35 (MEEIQQQTQKEEQKHREEEEEEEEGPPPGWESAVL) are disordered. Putative zinc finger stretches follow at residues 60–90 (QMVCGSCRRLLSYLRGSKHVKCSSCQTVNLV) and 98–128 (QVNCNNCKLLLMYPYGAPAVRCSSCNSVTDI). Residues 130–155 (ENNKRPPWSEQQGPLKSLSSLRRAEN) form a disordered region. Over residues 138-149 (SEQQGPLKSLSS) the composition is skewed to polar residues.

The protein resides in the nucleus. Its function is as follows. Putative zinc finger that may be involved in programmed cell death and defense response. The protein is Protein LOL2 (LOL2) of Arabidopsis thaliana (Mouse-ear cress).